We begin with the raw amino-acid sequence, 177 residues long: Peptidyl-tRNA hydrolase (177 aa).

Tyr-12 is a binding site for tRNA. His-17 functions as the Proton acceptor in the catalytic mechanism. TRNA-binding residues include Phe-63, Asn-65, and Asn-111.

The protein belongs to the PTH family. Monomer.

It is found in the cytoplasm. The catalysed reaction is an N-acyl-L-alpha-aminoacyl-tRNA + H2O = an N-acyl-L-amino acid + a tRNA + H(+). Its function is as follows. Hydrolyzes ribosome-free peptidyl-tRNAs (with 1 or more amino acids incorporated), which drop off the ribosome during protein synthesis, or as a result of ribosome stalling. In terms of biological role, catalyzes the release of premature peptidyl moieties from peptidyl-tRNA molecules trapped in stalled 50S ribosomal subunits, and thus maintains levels of free tRNAs and 50S ribosomes. This chain is Peptidyl-tRNA hydrolase, found in Buchnera aphidicola subsp. Acyrthosiphon pisum (strain 5A).